Reading from the N-terminus, the 255-residue chain is Small ribosomal subunit protein uS2 (255 aa).

Belongs to the universal ribosomal protein uS2 family.

The protein is Small ribosomal subunit protein uS2 (rpsB) of Streptococcus pyogenes serotype M1.